A 143-amino-acid polypeptide reads, in one-letter code: Large ribosomal subunit protein uL11 (143 aa).

This sequence belongs to the universal ribosomal protein uL11 family. Part of the ribosomal stalk of the 50S ribosomal subunit. Interacts with L10 and the large rRNA to form the base of the stalk. L10 forms an elongated spine to which L12 dimers bind in a sequential fashion forming a multimeric L10(L12)X complex. Post-translationally, one or more lysine residues are methylated.

In terms of biological role, forms part of the ribosomal stalk which helps the ribosome interact with GTP-bound translation factors. The chain is Large ribosomal subunit protein uL11 from Paraburkholderia phymatum (strain DSM 17167 / CIP 108236 / LMG 21445 / STM815) (Burkholderia phymatum).